Reading from the N-terminus, the 135-residue chain is Protein NrdI (135 aa).

The protein belongs to the NrdI family.

Functionally, probably involved in ribonucleotide reductase function. The polypeptide is Protein NrdI (Salmonella gallinarum (strain 287/91 / NCTC 13346)).